The chain runs to 21 residues: Short neurotoxin E1 (21 aa).

A disordered region spans residues 1-21 (MICYNHQSSEPPTTXTCSEGQ).

Contains 4 disulfide bonds. In terms of tissue distribution, expressed by the venom gland.

The protein resides in the secreted. Binds to muscle nicotinic acetylcholine receptor (nAChR) and inhibit acetylcholine from binding to the receptor, thereby impairing neuromuscular transmission. This is Short neurotoxin E1 from Micrurus pyrrhocryptus (Coral snake).